Consider the following 1419-residue polypeptide: Collagen alpha-1(II) chain (1419 aa).

Residues 1–25 (MIRLGAPQSLVLLTLLIATVLQCQG) form the signal peptide. A propeptide spans 26–113 (QDARKLGPKG…PGLGGGNFAA (88 aa)) (N-terminal propeptide). The segment at 28 to 1168 (ARKLGPKGQK…GQREKGPDPL (1141 aa)) is disordered. 2 stretches are compositionally biased toward basic and acidic residues: residues 36–47 (QKGEPGDIKDII) and 64–85 (PRGD…RDGE). Over residues 89 to 104 (PGNPGPPGPPGPPGPP) the composition is skewed to pro residues. 5-hydroxylysine is present on K122. An O-linked (Gal...) hydroxylysine glycan is attached at K122. The segment covering 124–135 (GGAQMGVMQGPM) has biased composition (low complexity). The tract at residues 133-1146 (GPMGPMGPRG…PGPPGPPGPP (1014 aa)) is triple-helical region. The segment covering 140–149 (PRGPPGPAGA) has biased composition (pro residues). Over residues 150 to 171 (PGPQGFQGNPGEPGEPGVSGPI) the composition is skewed to low complexity. Over residues 183–197 (PGDDGEAGKPGKAGE) the composition is skewed to basic and acidic residues. K219, K231, and K240 each carry 5-hydroxylysine. O-linked (Gal...) hydroxylysine glycosylation is found at K219, K231, and K240. Composition is skewed to low complexity over residues 242 to 252 (ESGSPGENGSP) and 267 to 282 (TGPA…DGQP). Positions 292-301 (GPAGGPGFLG) are enriched in gly residues. Residue K306 is modified to 5-hydroxylysine. An O-linked (Gal...) hydroxylysine glycan is attached at K306. Residues 335 to 363 (PAGASGNPGTDGIPGAKGSAGAPGIAGAP) show a composition bias toward low complexity. Residues 365-374 (FPGPRGPPGP) show a composition bias toward pro residues. The span at 404-417 (ETGPAGPQGAPGPA) shows a compositional bias: low complexity. A 5-hydroxylysine mark is found at K540 and K552. K540 and K552 each carry an O-linked (Gal...) hydroxylysine glycan. Low complexity predominate over residues 554-563 (LAGAPGLRGL). Residues P591 and P600 each carry the 4-hydroxyproline modification. 3-hydroxyproline; partial is present on P602. 2 positions are modified to 4-hydroxyproline: P603 and P606. The span at 638–668 (ERGSPGAQGLQGPRGLPGTPGTDGPKGAAGP) shows a compositional bias: low complexity. Residues 696 to 707 (KGDRGDVGEKGP) are compositionally biased toward basic and acidic residues. Composition is skewed to low complexity over residues 765-780 (AGFA…PGAK) and 809-846 (PTGV…NGNP). P839 is subject to 3-hydroxyproline; partial. A 4-hydroxyproline mark is found at P840, P846, and P852. Over residues 1001-1011 (APGPPGSPGPA) the composition is skewed to pro residues. The segment covering 1047-1061 (RGDKGEAGEPGERGL) has biased composition (basic and acidic residues). Position 1076 is a 3-hydroxyproline; partial (P1076). Composition is skewed to low complexity over residues 1080 to 1089 (SGDQGTSGPA) and 1103 to 1113 (PSGKDGSNGIP). Position 1113 is a 4-hydroxyproline (P1113). P1118 carries the 3-hydroxyproline modification. P1119 carries the 4-hydroxyproline modification. Pro residues predominate over residues 1131 to 1148 (AGPPGNPGPPGPPGPPGP). A 3-hydroxyproline; partial modification is found at P1133. A 4-hydroxyproline mark is found at P1134 and P1137. Position 1139 is a 3-hydroxyproline; partial (P1139). Residues P1140 and P1143 each carry the 4-hydroxyproline modification. A 3-hydroxyproline; partial modification is found at P1145. 4-hydroxyproline is present on P1146. A nonhelical region (C-terminal) region spans residues 1147–1173 (GPGIDMSAFAGLGQREKGPDPLQYMRA). The Fibrillar collagen NC1 domain occupies 1185-1419 (VEVDATLKSL…GVDIGPVCFL (235 aa)). 3 disulfides stabilise this stretch: C1215-C1247, C1255-C1417, and C1325-C1370. D1233, N1235, Q1236, C1238, and D1241 together coordinate Ca(2+). Residue N1320 is glycosylated (N-linked (GlcNAc...) asparagine).

The protein belongs to the fibrillar collagen family. As to quaternary structure, homotrimers of alpha 1(II) chains. In terms of processing, contains mostly 4-hydroxyproline. Prolines at the third position of the tripeptide repeating unit (G-X-P) are 4-hydroxylated in some or all of the chains. Contains 3-hydroxyproline at a few sites. This modification occurs on the first proline residue in the sequence motif Gly-Pro-Hyp, where Hyp is 4-hydroxyproline. Post-translationally, lysine residues at the third position of the tripeptide repeating unit (G-X-Y) are 5-hydroxylated in some or all of the chains. In terms of processing, O-glycosylated on hydroxylated lysine residues. The O-linked glycan consists of a Glc-Gal disaccharide. In terms of tissue distribution, expressed in chondrocytes.

The protein resides in the secreted. The protein localises to the extracellular space. It is found in the extracellular matrix. Functionally, type II collagen is specific for cartilaginous tissues. It is essential for the normal embryonic development of the skeleton, for linear growth and for the ability of cartilage to resist compressive forces. The protein is Collagen alpha-1(II) chain of Rattus norvegicus (Rat).